Here is a 227-residue protein sequence, read N- to C-terminus: Probable GTP-binding protein EngB (227 aa).

The 176-residue stretch at G41–P216 folds into the EngB-type G domain. GTP-binding positions include G49–S56, G76–Q80, D94–G97, T161–D164, and T195–S197. 2 residues coordinate Mg(2+): S56 and T78.

This sequence belongs to the TRAFAC class TrmE-Era-EngA-EngB-Septin-like GTPase superfamily. EngB GTPase family. The cofactor is Mg(2+).

Its function is as follows. Necessary for normal cell division and for the maintenance of normal septation. The chain is Probable GTP-binding protein EngB from Gluconobacter oxydans (strain 621H) (Gluconobacter suboxydans).